A 579-amino-acid polypeptide reads, in one-letter code: O-fucosyltransferase 24 (579 aa).

A helical; Signal-anchor for type II membrane protein membrane pass occupies residues 58–78 (LWAFSLFLLSILGISLRLGLC). Asparagine 133 is a glycosylation site (N-linked (GlcNAc...) asparagine). A substrate-binding site is contributed by 355-357 (HLR). N-linked (GlcNAc...) asparagine glycosylation is found at asparagine 528, asparagine 573, and asparagine 576.

This sequence belongs to the glycosyltransferase GT106 family.

It is found in the membrane. Its pathway is glycan metabolism. This is O-fucosyltransferase 24 from Arabidopsis thaliana (Mouse-ear cress).